Consider the following 169-residue polypeptide: Major pepsin inhibitor 3 (169 aa).

The signal sequence occupies residues 1–20; the sequence is MHVWLILSLASLWTSSIAYS. Position 21 is a pyrrolidone carboxylic acid (Q21). Intrachain disulfides connect C33-C79, C68-C86, and C99-C166. Residues 135–169 are disordered; it reads EEQQENQPPSSGMPHGAVPAGGLSPPPPPSFCTVQ. Pro residues predominate over residues 158 to 169; sequence SPPPPPSFCTVQ.

Belongs to the protease inhibitor I33 family. As to expression, body wall.

It localises to the secreted. In terms of biological role, this is an inhibitor of the aspartic protease pepsin. This Ascaris suum (Pig roundworm) protein is Major pepsin inhibitor 3.